Consider the following 394-residue polypeptide: Protein maelstrom (394 aa).

The segment at residues 2–69 (APKKQNGFMM…ARRDKRGSLN (68 aa)) is a DNA-binding region (HMG box). Residues 44–93 (TQQRGPYNSDAKDANAARRDKRGSLNGHGQVDKAQREAAESLMDKAQREA) are disordered. The span at 73-93 (QVDKAQREAAESLMDKAQREA) shows a compositional bias: basic and acidic residues.

It belongs to the maelstrom family.

The protein resides in the cytoplasm. It is found in the nucleus. Involved both in the piRNA and miRNA metabolic processes. As a component of the meiotic nuage, plays a central role during oogenesis by repressing transposable elements and preventing their mobilization, which is essential for the germline integrity. Repression of transposable elements is mediated via the piRNA metabolic process, which mediates the repression of transposable elements during meiosis by forming complexes composed of piRNAs and Piwi proteins and governs the repression of transposons. As a nuclear component, it is required for proper differentiation in the germline stem cell (GSC) lineage by repressing microRNA-7 (miR-7), thereby acting as an indirect regulator of bag-of-marbles (Bam). Acts by binding to the promoter of miR-7 gene and repressing its expression; miR-7 repression alleviates the Bam repression by miR-7, thereby allowing differentiation in the germline stem cell (GSC) lineage. The chain is Protein maelstrom (mael) from Drosophila simulans (Fruit fly).